Reading from the N-terminus, the 129-residue chain is Small ribosomal subunit protein uS8 (129 aa).

The protein belongs to the universal ribosomal protein uS8 family. Part of the 30S ribosomal subunit.

One of the primary rRNA binding proteins, it binds directly to 16S rRNA central domain where it helps coordinate assembly of the platform of the 30S subunit. The protein is Small ribosomal subunit protein uS8 of Nanoarchaeum equitans (strain Kin4-M).